Reading from the N-terminus, the 535-residue chain is Methylmalonate-semialdehyde/malonate-semialdehyde dehydrogenase [acylating], mitochondrial (535 aa).

Residues 1–33 (MAALLAAAAVRARILQVSSKVKSSPTWYSASSF) constitute a mitochondrion transit peptide. N6-acetyllysine; alternate is present on residues lysine 47, lysine 52, lysine 55, and lysine 76. N6-succinyllysine; alternate is present on residues lysine 47, lysine 52, lysine 55, and lysine 76. N6-acetyllysine is present on lysine 87. 2 positions are modified to N6-acetyllysine; alternate: lysine 117 and lysine 129. An N6-succinyllysine; alternate mark is found at lysine 117 and lysine 129. Alanine 183, phenylalanine 185, lysine 209, glutamate 212, arginine 213, and serine 262 together coordinate NAD(+). Residue serine 262 is modified to Phosphoserine. An N6-acetyllysine modification is found at lysine 298. Cysteine 317 serves as the catalytic Nucleophile. 2 positions are modified to N6-acetyllysine: lysine 330 and lysine 331. Lysine 364 and lysine 376 each carry N6-acetyllysine; alternate. Residues lysine 364 and lysine 376 each carry the N6-succinyllysine; alternate modification. Serine 380 carries the phosphoserine modification. Lysine 391 bears the N6-succinyllysine mark. Glutamate 417 is an NAD(+) binding site. Residue lysine 500 is modified to N6-acetyllysine. The residue at position 517 (lysine 517) is an N6-succinyllysine.

It belongs to the aldehyde dehydrogenase family. Homotetramer.

It localises to the mitochondrion. The enzyme catalyses 3-oxopropanoate + NAD(+) + CoA + H2O = hydrogencarbonate + acetyl-CoA + NADH + H(+). It carries out the reaction 2-methyl-3-oxopropanoate + NAD(+) + CoA + H2O = propanoyl-CoA + hydrogencarbonate + NADH + H(+). It catalyses the reaction (R)-2-methyl-3-oxopropanoate + NAD(+) + CoA + H2O = propanoyl-CoA + hydrogencarbonate + NADH + H(+). The catalysed reaction is (S)-2-methyl-3-oxopropanoate + NAD(+) + CoA + H2O = propanoyl-CoA + hydrogencarbonate + NADH + H(+). Its function is as follows. Malonate and methylmalonate semialdehyde dehydrogenase involved in the catabolism of valine, thymine, and compounds catabolized by way of beta-alanine, including uracil and cytidine. The polypeptide is Methylmalonate-semialdehyde/malonate-semialdehyde dehydrogenase [acylating], mitochondrial (Homo sapiens (Human)).